A 507-amino-acid polypeptide reads, in one-letter code: Histidine ammonia-lyase (507 aa).

A cross-link (5-imidazolinone (Ala-Gly)) is located at residues 143–145; it reads ASG. S144 bears the 2,3-didehydroalanine (Ser) mark.

It belongs to the PAL/histidase family. Post-translationally, contains an active site 4-methylidene-imidazol-5-one (MIO), which is formed autocatalytically by cyclization and dehydration of residues Ala-Ser-Gly.

The protein resides in the cytoplasm. It carries out the reaction L-histidine = trans-urocanate + NH4(+). Its pathway is amino-acid degradation; L-histidine degradation into L-glutamate; N-formimidoyl-L-glutamate from L-histidine: step 1/3. In Alkaliphilus oremlandii (strain OhILAs) (Clostridium oremlandii (strain OhILAs)), this protein is Histidine ammonia-lyase.